A 204-amino-acid chain; its full sequence is LexA repressor (204 aa).

A DNA-binding region (H-T-H motif) is located at residues 31-51 (VREICAKVGLSSTSTVHGHLS). Active-site for autocatalytic cleavage activity residues include serine 128 and lysine 165.

This sequence belongs to the peptidase S24 family. As to quaternary structure, homodimer.

It catalyses the reaction Hydrolysis of Ala-|-Gly bond in repressor LexA.. Represses a number of genes involved in the response to DNA damage (SOS response), including recA and lexA. In the presence of single-stranded DNA, RecA interacts with LexA causing an autocatalytic cleavage which disrupts the DNA-binding part of LexA, leading to derepression of the SOS regulon and eventually DNA repair. The protein is LexA repressor of Clostridium acetobutylicum (strain ATCC 824 / DSM 792 / JCM 1419 / IAM 19013 / LMG 5710 / NBRC 13948 / NRRL B-527 / VKM B-1787 / 2291 / W).